The following is a 339-amino-acid chain: GTPase Obg (339 aa).

The 159-residue stretch at 1-159 (MKFVDEAFVR…RELKLELKLL (159 aa)) folds into the Obg domain. A disordered region spans residues 127–147 (NTHFKSSTNRAPRRTTSGEEG). An OBG-type G domain is found at 160-333 (ADVGLLGLPN…LCYDLMSFLE (174 aa)). GTP is bound by residues 166-173 (GLPNAGKS), 191-195 (FTTLY), 213-216 (DIPG), 283-286 (NKID), and 314-316 (SAI). Mg(2+) is bound by residues Ser173 and Thr193.

This sequence belongs to the TRAFAC class OBG-HflX-like GTPase superfamily. OBG GTPase family. As to quaternary structure, monomer. It depends on Mg(2+) as a cofactor.

The protein localises to the cytoplasm. Its function is as follows. An essential GTPase which binds GTP, GDP and possibly (p)ppGpp with moderate affinity, with high nucleotide exchange rates and a fairly low GTP hydrolysis rate. Plays a role in control of the cell cycle, stress response, ribosome biogenesis and in those bacteria that undergo differentiation, in morphogenesis control. This chain is GTPase Obg, found in Coxiella burnetii (strain CbuG_Q212) (Coxiella burnetii (strain Q212)).